Reading from the N-terminus, the 458-residue chain is UDP-N-acetylmuramoylalanine--D-glutamate ligase (458 aa).

124-130 (GSDGKTT) serves as a coordination point for ATP.

It belongs to the MurCDEF family.

The protein resides in the cytoplasm. The enzyme catalyses UDP-N-acetyl-alpha-D-muramoyl-L-alanine + D-glutamate + ATP = UDP-N-acetyl-alpha-D-muramoyl-L-alanyl-D-glutamate + ADP + phosphate + H(+). It functions in the pathway cell wall biogenesis; peptidoglycan biosynthesis. Its function is as follows. Cell wall formation. Catalyzes the addition of glutamate to the nucleotide precursor UDP-N-acetylmuramoyl-L-alanine (UMA). This Clostridium novyi (strain NT) protein is UDP-N-acetylmuramoylalanine--D-glutamate ligase.